The primary structure comprises 250 residues: Ferritin, chloroplastic (250 aa).

The transit peptide at 1 to 49 (MALAPSKVSTFSGFSPKPSVGGAQKNPTCSVSLSFLNEKLGSRNLRVCA) directs the protein to the chloroplast. The extension peptide (EP) stretch occupies residues 50-82 (STVPLTGVIFEPFEEVKKSELAVPTAPQVSLAR). Residues 83–236 (QNYADECESA…EYVAQLRRVG (154 aa)) form the Ferritin-like diiron domain. 5 residues coordinate Fe cation: E100, E135, H138, E184, and Q218.

This sequence belongs to the ferritin family. As to quaternary structure, oligomer of 24 subunits. There are two types of subunits: L (light) chain and H (heavy) chain. The major chain can be light or heavy, depending on the species and tissue type. The functional molecule forms a roughly spherical shell with a diameter of 12 nm and contains a central cavity into which the insoluble mineral iron core is deposited.

It is found in the plastid. It localises to the chloroplast. The catalysed reaction is 4 Fe(2+) + O2 + 4 H(+) = 4 Fe(3+) + 2 H2O. Functionally, stores iron in a soluble, non-toxic, readily available form. Important for iron homeostasis. Has ferroxidase activity. Iron is taken up in the ferrous form and deposited as ferric hydroxides after oxidation. The chain is Ferritin, chloroplastic from Malus baccata var. xiaojinensis (Apple).